A 444-amino-acid chain; its full sequence is Transposase for insertion sequence element IS1557 (444 aa).

Residues proline 273–arginine 292 form a disordered region.

This sequence belongs to the transposase 12 family.

In Mycobacterium tuberculosis (strain CDC 1551 / Oshkosh), this protein is Transposase for insertion sequence element IS1557.